The following is a 119-amino-acid chain: Large ribosomal subunit protein uL22c (119 aa).

The protein belongs to the universal ribosomal protein uL22 family. In terms of assembly, part of the 50S ribosomal subunit.

Its subcellular location is the plastid. The protein resides in the chloroplast. This protein binds specifically to 23S rRNA. Functionally, the globular domain of the protein is located near the polypeptide exit tunnel on the outside of the subunit, while an extended beta-hairpin is found that lines the wall of the exit tunnel in the center of the 70S ribosome. The sequence is that of Large ribosomal subunit protein uL22c (rpl22) from Angiopteris evecta (Mule's foot fern).